A 252-amino-acid chain; its full sequence is tRNA (guanine-N(1)-)-methyltransferase (252 aa).

S-adenosyl-L-methionine-binding positions include glycine 118 and 138–143; that span reads IGDYVL.

Belongs to the RNA methyltransferase TrmD family. As to quaternary structure, homodimer.

It is found in the cytoplasm. The enzyme catalyses guanosine(37) in tRNA + S-adenosyl-L-methionine = N(1)-methylguanosine(37) in tRNA + S-adenosyl-L-homocysteine + H(+). In terms of biological role, specifically methylates guanosine-37 in various tRNAs. In Pseudomonas paraeruginosa (strain DSM 24068 / PA7) (Pseudomonas aeruginosa (strain PA7)), this protein is tRNA (guanine-N(1)-)-methyltransferase.